Here is a 375-residue protein sequence, read N- to C-terminus: Queuine tRNA-ribosyltransferase (375 aa).

Asp90 functions as the Proton acceptor in the catalytic mechanism. Residues 90–94, Asp144, Gln193, and Gly220 contribute to the substrate site; that span reads DSGGF. Positions 251-257 are RNA binding; that stretch reads GVGTPED. The active-site Nucleophile is Asp270. Positions 275 to 279 are RNA binding; important for wobble base 34 recognition; it reads TRNAR. Residues Cys308, Cys310, Cys313, and His339 each coordinate Zn(2+).

Belongs to the queuine tRNA-ribosyltransferase family. In terms of assembly, homodimer. Within each dimer, one monomer is responsible for RNA recognition and catalysis, while the other monomer binds to the replacement base PreQ1. Requires Zn(2+) as cofactor.

It catalyses the reaction 7-aminomethyl-7-carbaguanine + guanosine(34) in tRNA = 7-aminomethyl-7-carbaguanosine(34) in tRNA + guanine. Its pathway is tRNA modification; tRNA-queuosine biosynthesis. Functionally, catalyzes the base-exchange of a guanine (G) residue with the queuine precursor 7-aminomethyl-7-deazaguanine (PreQ1) at position 34 (anticodon wobble position) in tRNAs with GU(N) anticodons (tRNA-Asp, -Asn, -His and -Tyr). Catalysis occurs through a double-displacement mechanism. The nucleophile active site attacks the C1' of nucleotide 34 to detach the guanine base from the RNA, forming a covalent enzyme-RNA intermediate. The proton acceptor active site deprotonates the incoming PreQ1, allowing a nucleophilic attack on the C1' of the ribose to form the product. After dissociation, two additional enzymatic reactions on the tRNA convert PreQ1 to queuine (Q), resulting in the hypermodified nucleoside queuosine (7-(((4,5-cis-dihydroxy-2-cyclopenten-1-yl)amino)methyl)-7-deazaguanosine). This chain is Queuine tRNA-ribosyltransferase, found in Janthinobacterium sp. (strain Marseille) (Minibacterium massiliensis).